The primary structure comprises 105 residues: Probable guanidinium efflux system subunit GdnD (105 aa).

Helical transmembrane passes span methionine 1–methionine 21, tryptophan 32–glutamate 52, alanine 59–tyrosine 79, and alanine 85–serine 105.

This sequence belongs to the drug/metabolite transporter (DMT) superfamily. Small multidrug resistance (SMR) (TC 2.A.7.1) family. YkkC/YkkD subfamily. As to quaternary structure, the efflux pump is composed of GdnC and GdnD.

It localises to the cell membrane. In terms of biological role, probably involved in guanidinium transport. In vitro, confers resistance to a broad range of toxic compounds such as cationic dyes, neutral and anionic antimicrobials. The protein is Probable guanidinium efflux system subunit GdnD of Bacillus subtilis (strain 168).